The sequence spans 308 residues: Ferrochelatase (308 aa).

Fe cation-binding residues include H167 and E239.

The protein belongs to the ferrochelatase family.

Its subcellular location is the cytoplasm. It carries out the reaction heme b + 2 H(+) = protoporphyrin IX + Fe(2+). The protein operates within porphyrin-containing compound metabolism; protoheme biosynthesis; protoheme from protoporphyrin-IX: step 1/1. Its function is as follows. Catalyzes the ferrous insertion into protoporphyrin IX. The polypeptide is Ferrochelatase (Thermoplasma acidophilum (strain ATCC 25905 / DSM 1728 / JCM 9062 / NBRC 15155 / AMRC-C165)).